The following is a 118-amino-acid chain: Ribonuclease P protein component (118 aa).

This sequence belongs to the RnpA family. In terms of assembly, consists of a catalytic RNA component (M1 or rnpB) and a protein subunit.

The enzyme catalyses Endonucleolytic cleavage of RNA, removing 5'-extranucleotides from tRNA precursor.. Functionally, RNaseP catalyzes the removal of the 5'-leader sequence from pre-tRNA to produce the mature 5'-terminus. It can also cleave other RNA substrates such as 4.5S RNA. The protein component plays an auxiliary but essential role in vivo by binding to the 5'-leader sequence and broadening the substrate specificity of the ribozyme. The sequence is that of Ribonuclease P protein component from Desulfatibacillum aliphaticivorans.